The chain runs to 536 residues: 2-isopropylmalate synthase (536 aa).

The Pyruvate carboxyltransferase domain maps to 8–269 (IIIFDTTLRD…YYNPFLGRPV (262 aa)). Mn(2+)-binding residues include Asp-17, His-208, His-210, and Asn-244. A regulatory domain region spans residues 408 to 536 (RLELVQVSCG…KEKAAVTSAS (129 aa)).

The protein belongs to the alpha-IPM synthase/homocitrate synthase family. LeuA type 1 subfamily. In terms of assembly, homodimer. It depends on Mn(2+) as a cofactor.

The protein resides in the cytoplasm. It carries out the reaction 3-methyl-2-oxobutanoate + acetyl-CoA + H2O = (2S)-2-isopropylmalate + CoA + H(+). It participates in amino-acid biosynthesis; L-leucine biosynthesis; L-leucine from 3-methyl-2-oxobutanoate: step 1/4. Its function is as follows. Catalyzes the condensation of the acetyl group of acetyl-CoA with 3-methyl-2-oxobutanoate (2-ketoisovalerate) to form 3-carboxy-3-hydroxy-4-methylpentanoate (2-isopropylmalate). The chain is 2-isopropylmalate synthase from Gloeothece citriformis (strain PCC 7424) (Cyanothece sp. (strain PCC 7424)).